A 606-amino-acid polypeptide reads, in one-letter code: Elongation factor 4 (606 aa).

Residues 11–193 (PHIRNFSIIA…RLVRDVPPPK (183 aa)) enclose the tr-type G domain. Residues 23 to 28 (DHGKST) and 140 to 143 (NKMD) each bind GTP.

The protein belongs to the TRAFAC class translation factor GTPase superfamily. Classic translation factor GTPase family. LepA subfamily.

The protein resides in the cell inner membrane. It catalyses the reaction GTP + H2O = GDP + phosphate + H(+). Its function is as follows. Required for accurate and efficient protein synthesis under certain stress conditions. May act as a fidelity factor of the translation reaction, by catalyzing a one-codon backward translocation of tRNAs on improperly translocated ribosomes. Back-translocation proceeds from a post-translocation (POST) complex to a pre-translocation (PRE) complex, thus giving elongation factor G a second chance to translocate the tRNAs correctly. Binds to ribosomes in a GTP-dependent manner. The polypeptide is Elongation factor 4 (Chromohalobacter salexigens (strain ATCC BAA-138 / DSM 3043 / CIP 106854 / NCIMB 13768 / 1H11)).